Reading from the N-terminus, the 32-residue chain is uncharacterized protein (32 aa).

A helical transmembrane segment spans residues I3–F23.

The protein localises to the cell inner membrane. This is an uncharacterized protein from Escherichia coli (strain K12).